The primary structure comprises 393 residues: Probable galacturonosyltransferase-like 8 (393 aa).

At 1 to 4 (MSSR) the chain is on the cytoplasmic side. Residues 5–25 (FSLTVVCLIALLPFVVGIRLI) traverse the membrane as a helical; Signal-anchor for type II membrane protein segment. Over 26-393 (PARITSVGDG…SELTDDSSFL (368 aa)) the chain is Lumenal. An N-linked (GlcNAc...) asparagine glycan is attached at asparagine 226.

It belongs to the glycosyltransferase 8 family.

It is found in the golgi apparatus membrane. It functions in the pathway glycan metabolism; pectin biosynthesis. Its function is as follows. May be involved in pectin and/or xylans biosynthesis in cell walls. In Arabidopsis thaliana (Mouse-ear cress), this protein is Probable galacturonosyltransferase-like 8 (GATL8).